A 304-amino-acid chain; its full sequence is MGGFVKTQKTNAYHKRFQVKFKRRRQGKTDYRARIRLTNQDKNKYNTPKYRFVVRFTNKDITAQIVYATIAGDIVMAAAYSHELPRYGLEVGLTNYAAAYCTGLLLARRVLKLRGLDQEYEGNIEATGEDYYVEPADERRPFRALLDVGLIRTTTGNRVFGALKGALDGGLDIPHSDKRFAGFKKDEKQLDSDIHRKYIYGGHVADYMRSMAEEEPEKFQAHFSEYLKKGIDADGMEALYKKVHAAIRADPTMAKSTKKEPATHKRYNLKKLTYEQRKASLVERLNALNSSAGADDDDEEEDDE.

The segment at 285–304 (LNALNSSAGADDDDEEEDDE) is disordered. The segment covering 294–304 (ADDDDEEEDDE) has biased composition (acidic residues).

It belongs to the universal ribosomal protein uL18 family. Component of the large ribosomal subunit (LSU).

It is found in the cytoplasm. The protein localises to the nucleus. Its function is as follows. Component of the ribosome, a large ribonucleoprotein complex responsible for the synthesis of proteins in the cell. The small ribosomal subunit (SSU) binds messenger RNAs (mRNAs) and translates the encoded message by selecting cognate aminoacyl-transfer RNA (tRNA) molecules. The large subunit (LSU) contains the ribosomal catalytic site termed the peptidyl transferase center (PTC), which catalyzes the formation of peptide bonds, thereby polymerizing the amino acids delivered by tRNAs into a polypeptide chain. The nascent polypeptides leave the ribosome through a tunnel in the LSU and interact with protein factors that function in enzymatic processing, targeting, and the membrane insertion of nascent chains at the exit of the ribosomal tunnel. This chain is Large ribosomal subunit protein uL18z (RPL5A), found in Oryza sativa subsp. japonica (Rice).